The chain runs to 432 residues: Gamma-glutamyl phosphate reductase (432 aa).

The protein belongs to the gamma-glutamyl phosphate reductase family.

Its subcellular location is the cytoplasm. It carries out the reaction L-glutamate 5-semialdehyde + phosphate + NADP(+) = L-glutamyl 5-phosphate + NADPH + H(+). The protein operates within amino-acid biosynthesis; L-proline biosynthesis; L-glutamate 5-semialdehyde from L-glutamate: step 2/2. Catalyzes the NADPH-dependent reduction of L-glutamate 5-phosphate into L-glutamate 5-semialdehyde and phosphate. The product spontaneously undergoes cyclization to form 1-pyrroline-5-carboxylate. This Ruminiclostridium cellulolyticum (strain ATCC 35319 / DSM 5812 / JCM 6584 / H10) (Clostridium cellulolyticum) protein is Gamma-glutamyl phosphate reductase.